Here is a 196-residue protein sequence, read N- to C-terminus: Zinc metalloproteinase-disintegrin-like bothrojarin-3 (196 aa).

The region spanning 2–88 (PPVCGTELLE…DCPTDDIQRN (87 aa)) is the Disintegrin domain. Ca(2+)-binding residues include V4, L9, E11, E14, and D17. Disulfide bonds link C5/C34, C16/C29, C18/C24, C28/C51, C42/C48, C47/C73, C60/C80, C67/C99, C92/C104, C111/C161, C126/C168, C139/C149, and C156/C193. The short motif at 66–68 (ECD) is the D/ECD-tripeptide element.

It belongs to the venom metalloproteinase (M12B) family. P-III subfamily. P-IIIa sub-subfamily. In terms of assembly, monomer. Zn(2+) is required as a cofactor. Post-translationally, glycosylated. As to expression, expressed by the venom gland.

It localises to the secreted. Functionally, the hemorrhagic metalloproteinase-disintegrin-like bothrojarin-1 is a potent inhibitor of collagen-induced platelet aggregation by blockage of alpha-2/beta-1 (ITGA2/ITGB1) integrin. It does not present any fibrinogen-clotting activity. This chain is Zinc metalloproteinase-disintegrin-like bothrojarin-3, found in Bothrops jararaca (Jararaca).